A 227-amino-acid polypeptide reads, in one-letter code: uncharacterized protein (227 aa).

4 helical membrane-spanning segments follow: residues Val-17–Ser-37, Gly-79–Ile-99, Leu-112–Ile-132, and Val-181–Phe-201.

It is found in the cell membrane. This is an uncharacterized protein from Escherichia coli (strain K12).